Reading from the N-terminus, the 733-residue chain is Protein OBERON 3 (733 aa).

Residues 1-15 show a composition bias toward basic and acidic residues; sequence MIGEKDLAGDGECSR. 2 disordered regions span residues 1-42 and 118-142; these read MIGE…YHQK and NPNSSKRKAHEEEEEAEEEEDKKSN. The segment covering 21-30 has biased composition (polar residues); the sequence is PRFSNLNNQT. The stretch at 120–153 forms a coiled coil; the sequence is NSSKRKAHEEEEEAEEEEDKKSNKIETLNLSLAL. A PHD-type zinc finger spans residues 436–500; the sequence is SCMCPVCLRF…MFHCIGCAHK (65 aa). The segment at 592–614 is disordered; sequence VAAETSYRKDEASVTPSTSKDQK. A coiled-coil region spans residues 644–733; the sequence is MFQKKADEAR…RMEVTRQQLV (90 aa).

In terms of assembly, self-interacts. Interacts with OBE1 and OBE2. Interacts with OBE4.

It localises to the nucleus. In terms of biological role, probable transcription factor that functions redundantly with OBE4 in specification of the hypophysis and establishment of the embryonic root. Involved in the activation of ARF5/MP-dependent gene expression during embryonic root meristem initiation. Involved in shoot meristem homeostasis. The protein is Protein OBERON 3 of Arabidopsis thaliana (Mouse-ear cress).